The chain runs to 225 residues: Protein-L-isoaspartate O-methyltransferase (225 aa).

S75 is a catalytic residue.

Belongs to the methyltransferase superfamily. L-isoaspartyl/D-aspartyl protein methyltransferase family.

The protein resides in the cytoplasm. It carries out the reaction [protein]-L-isoaspartate + S-adenosyl-L-methionine = [protein]-L-isoaspartate alpha-methyl ester + S-adenosyl-L-homocysteine. Catalyzes the methyl esterification of L-isoaspartyl residues in peptides and proteins that result from spontaneous decomposition of normal L-aspartyl and L-asparaginyl residues. It plays a role in the repair and/or degradation of damaged proteins. This is Protein-L-isoaspartate O-methyltransferase from Xylella fastidiosa (strain M23).